The following is a 138-amino-acid chain: Extracellular glycoprotein lacritin (138 aa).

The N-terminal stretch at 1 to 19 (MKFTTLLFLAAVAGALVYA) is a signal peptide. The disordered stretch occupies residues 20 to 79 (EDASSDSTGADPAQEAGTSKPNEEISGPAEPASPPETTTTAQETSAAAVQGTAKVTSSRQ). Over residues 43–67 (EISGPAEPASPPETTTTAQETSAAA) the composition is skewed to low complexity. Asn119 carries N-linked (GlcNAc...) asparagine glycosylation.

As to expression, expressed in secretory granules of many acinar cells in lacrimal gland and in scattered acinar cells of salivary glands.

The protein resides in the secreted. Modulates secretion by lacrimal acinar cells. This Homo sapiens (Human) protein is Extracellular glycoprotein lacritin (LACRT).